Reading from the N-terminus, the 493-residue chain is tRNA-2-methylthio-N(6)-dimethylallyladenosine synthase (493 aa).

Positions 1-14 (MPMTGLLQTTLSTA) are enriched in polar residues. The interval 1–31 (MPMTGLLQTTLSTADQDRSGPAATTGDTPAR) is disordered. The MTTase N-terminal domain maps to 35–155 (KRLHVITWGC…LGGMVRRAMN (121 aa)). [4Fe-4S] cluster contacts are provided by cysteine 44, cysteine 80, cysteine 118, cysteine 199, cysteine 203, and cysteine 206. The region spanning 185–417 (LAGGRTAFLT…QALLRTQQEA (233 aa)) is the Radical SAM core domain. The TRAM domain occupies 420–482 (TACIGKTVNV…TNSLSATLPD (63 aa)).

This sequence belongs to the methylthiotransferase family. MiaB subfamily. As to quaternary structure, monomer. The cofactor is [4Fe-4S] cluster.

The protein resides in the cytoplasm. The catalysed reaction is N(6)-dimethylallyladenosine(37) in tRNA + (sulfur carrier)-SH + AH2 + 2 S-adenosyl-L-methionine = 2-methylsulfanyl-N(6)-dimethylallyladenosine(37) in tRNA + (sulfur carrier)-H + 5'-deoxyadenosine + L-methionine + A + S-adenosyl-L-homocysteine + 2 H(+). Catalyzes the methylthiolation of N6-(dimethylallyl)adenosine (i(6)A), leading to the formation of 2-methylthio-N6-(dimethylallyl)adenosine (ms(2)i(6)A) at position 37 in tRNAs that read codons beginning with uridine. This is tRNA-2-methylthio-N(6)-dimethylallyladenosine synthase from Granulibacter bethesdensis (strain ATCC BAA-1260 / CGDNIH1).